A 314-amino-acid polypeptide reads, in one-letter code: Nodulation protein D 1 (314 aa).

Residues 6–63 enclose the HTH lysR-type domain; that stretch reads LDLNLLVVLDALLTERTLTAAASSINLSQPAMSAAVARLRDYFNDELFTTSGRERVLT. The segment at residues 23–42 is a DNA-binding region (H-T-H motif); sequence LTAAASSINLSQPAMSAAVA.

Belongs to the LysR transcriptional regulatory family.

NodD regulates the expression of the nodABCFE genes which encode other nodulation proteins. NodD is also a negative regulator of its own expression. Binds flavenoids as inducers. The sequence is that of Nodulation protein D 1 (nodD1) from Mesorhizobium japonicum (strain LMG 29417 / CECT 9101 / MAFF 303099) (Mesorhizobium loti (strain MAFF 303099)).